The chain runs to 1415 residues: DNA-directed RNA polymerase subunit beta' (1415 aa).

Residues Cys72, Cys74, Cys87, and Cys90 each contribute to the Zn(2+) site. Mg(2+)-binding residues include Asp463, Asp465, and Asp467. Zn(2+) contacts are provided by Cys812, Cys886, Cys893, and Cys896.

The protein belongs to the RNA polymerase beta' chain family. In terms of assembly, the RNAP catalytic core consists of 2 alpha, 1 beta, 1 beta' and 1 omega subunit. When a sigma factor is associated with the core the holoenzyme is formed, which can initiate transcription. Mg(2+) serves as cofactor. Zn(2+) is required as a cofactor.

The enzyme catalyses RNA(n) + a ribonucleoside 5'-triphosphate = RNA(n+1) + diphosphate. DNA-dependent RNA polymerase catalyzes the transcription of DNA into RNA using the four ribonucleoside triphosphates as substrates. This is DNA-directed RNA polymerase subunit beta' from Dinoroseobacter shibae (strain DSM 16493 / NCIMB 14021 / DFL 12).